A 291-amino-acid polypeptide reads, in one-letter code: Transcription factor bHLH53 (291 aa).

In terms of domain architecture, bHLH spans 163 to 212; sequence PTLSSQSIAARGRRRRIAEKTHELGKLIPGGNKLNTAEMFQAAAKYVKFL.

As to quaternary structure, homodimer. In terms of tissue distribution, expressed constitutively in roots, leaves, stems, and flowers.

Its subcellular location is the nucleus. The sequence is that of Transcription factor bHLH53 (BHLH53) from Arabidopsis thaliana (Mouse-ear cress).